Consider the following 77-residue polypeptide: Large ribosomal subunit protein bL31 (77 aa).

The protein belongs to the bacterial ribosomal protein bL31 family. Type A subfamily. In terms of assembly, part of the 50S ribosomal subunit.

Its function is as follows. Binds the 23S rRNA. The chain is Large ribosomal subunit protein bL31 from Microcystis aeruginosa (strain NIES-843 / IAM M-2473).